Reading from the N-terminus, the 529-residue chain is UPF0159 protein TC_0921 (529 aa).

ThyX domains are found at residues 38-274 (KGAL…AEPH) and 309-511 (KGVK…LKFV).

Belongs to the UPF0159 family.

The polypeptide is UPF0159 protein TC_0921 (Chlamydia muridarum (strain MoPn / Nigg)).